The primary structure comprises 61 residues: Small ribosomal subunit protein uS14 (61 aa).

Zn(2+) is bound by residues C24, C27, C40, and C43.

The protein belongs to the universal ribosomal protein uS14 family. Zinc-binding uS14 subfamily. Part of the 30S ribosomal subunit. Contacts proteins S3 and S10. Zn(2+) is required as a cofactor.

Binds 16S rRNA, required for the assembly of 30S particles and may also be responsible for determining the conformation of the 16S rRNA at the A site. The protein is Small ribosomal subunit protein uS14 of Frankia alni (strain DSM 45986 / CECT 9034 / ACN14a).